Consider the following 614-residue polypeptide: Vitamin B12 transporter BtuB (614 aa).

An N-terminal signal peptide occupies residues 1–20 (MIKKASLLTACSVTAFSAWA). The TonB box signature appears at 26–33 (DTLVVTAN). The region spanning 38-152 (PRSTVLAPTT…IGGVVNIITT (115 aa)) is the TBDR plug domain. Residues leucine 83, serine 85, asparagine 92, and 110-111 (VS) each bind cyanocob(III)alamin. The region spanning 155–614 (HPGTEISAGW…EYTLSGSYTF (460 aa)) is the TBDR beta-barrel domain. 3 consecutive transmembrane segments (beta stranded) span residues 158 to 165 (TEISAGWG), 169 to 178 (YQNYDVSTQQ), and 184 to 195 (TRVTLLGDYAHT). 4 residues coordinate Ca(2+): aspartate 199, glutamine 211, aspartate 213, and aspartate 215. 2 consecutive transmembrane segments (beta stranded) span residues 217 to 227 (FLSKTLYGALE) and 232 to 248 (DVWS…NRTN). 2 residues coordinate Ca(2+): tyrosine 249 and aspartate 250. Alanine 251 is a binding site for cyanocob(III)alamin. Residue aspartate 261 participates in Ca(2+) binding. Transmembrane regions (beta stranded) follow at residues 263-277 (RKLY…LRYN), 279-296 (ELIK…KDYN), 309-325 (TLDE…NNII), 328-337 (HGNIGAGVDW), 353-369 (YDQR…QQVG), 371-381 (FTFEGAGRSDD), 385-400 (FGRH…WEFI), 403-417 (YRFI…KAPN), 434-443 (KSKQWEGAFE), 449-458 (VNWRISGYRN), 473-490 (YYNE…TANF), 494-509 (PLTH…ARNA), 517-529 (RRAK…QLDW), and 535-550 (DWGI…YDKD). A cyanocob(III)alamin-binding site is contributed by threonine 309. Residue arginine 517 coordinates cyanocob(III)alamin. Tyrosine 551 is a binding site for cyanocob(III)alamin. A run of 3 beta stranded transmembrane segments spans residues 558 to 572 (TVKM…LAVA), 585 to 596 (IANLFDKDYETV), and 602 to 614 (AGRE…SYTF). The TonB C-terminal box signature appears at 597 to 614 (YGYQTAGREYTLSGSYTF).

This sequence belongs to the TonB-dependent receptor family. BtuB (TC 1.B.14.3.1) subfamily.

It is found in the cell outer membrane. In terms of biological role, involved in the active translocation of vitamin B12 (cyanocobalamin) across the outer membrane to the periplasmic space. It derives its energy for transport by interacting with the trans-periplasmic membrane protein TonB. The polypeptide is Vitamin B12 transporter BtuB (Escherichia coli O1:K1 / APEC).